The primary structure comprises 351 residues: Nitronate monooxygenase (351 aa).

FMN contacts are provided by residues leucine 21, asparagine 69, glutamine 176, glycine 181, glycine 218, and 237–240 (QMGT).

This sequence belongs to the nitronate monooxygenase family. NMO class I subfamily. FMN is required as a cofactor.

It catalyses the reaction 3 propionate 3-nitronate + 3 O2 + H2O = 3 3-oxopropanoate + 2 nitrate + nitrite + H2O2 + 3 H(+). Nitronate monooxygenase that uses molecular oxygen to catalyze the oxidative denitrification of alkyl nitronates. The toxin propionate 3-nitronate (P3N) is the best substrate (and the presumed physiological substrate), but this enzyme is also active on other primary and secondary nitronates such as propyl-1-nitronate, ethylnitronate, pentyl-1-nitronate, butyl-1-nitronate and propyl-2-nitronate. Is likely involved in the degradation of P3N, that allows P.aeruginosa PAO1 to grow on 3-nitropropionate/P3N as the sole nitrogen source. Also functions in the detoxification of P3N, a metabolic poison produced by plants and fungi as a defense mechanism. Cannot oxidize nitroalkanes such as 3-nitropropionate, nitroethane, 1-nitropropane, 1-nitrobutane, 1-nitropentane, or 2-nitropropane. This is Nitronate monooxygenase from Pseudomonas aeruginosa (strain ATCC 15692 / DSM 22644 / CIP 104116 / JCM 14847 / LMG 12228 / 1C / PRS 101 / PAO1).